Here is a 24-residue protein sequence, read N- to C-terminus: Brevinin-1Bc (24 aa).

Cysteines 18 and 24 form a disulfide.

Expressed by the skin glands.

The protein resides in the secreted. Its function is as follows. Antibacterial activity against Gram-positive bacterium S.aureus. The sequence is that of Brevinin-1Bc from Lithobates berlandieri (Rio Grande leopard frog).